A 471-amino-acid chain; its full sequence is Glutamate--tRNA ligase (471 aa).

A 'HIGH' region motif is present at residues 9–19 (PSPTGYLHVGG). Residues Cys-98, Cys-100, Cys-125, and His-127 each coordinate Zn(2+). The short motif at 237–241 (KLSKR) is the 'KMSKS' region element. Residue Lys-240 participates in ATP binding.

The protein belongs to the class-I aminoacyl-tRNA synthetase family. Glutamate--tRNA ligase type 1 subfamily. Monomer. It depends on Zn(2+) as a cofactor.

It localises to the cytoplasm. The catalysed reaction is tRNA(Glu) + L-glutamate + ATP = L-glutamyl-tRNA(Glu) + AMP + diphosphate. Its function is as follows. Catalyzes the attachment of glutamate to tRNA(Glu) in a two-step reaction: glutamate is first activated by ATP to form Glu-AMP and then transferred to the acceptor end of tRNA(Glu). The protein is Glutamate--tRNA ligase of Escherichia coli (strain ATCC 8739 / DSM 1576 / NBRC 3972 / NCIMB 8545 / WDCM 00012 / Crooks).